The following is a 254-amino-acid chain: 3-deoxy-manno-octulosonate cytidylyltransferase (254 aa).

Belongs to the KdsB family.

Its subcellular location is the cytoplasm. The catalysed reaction is 3-deoxy-alpha-D-manno-oct-2-ulosonate + CTP = CMP-3-deoxy-beta-D-manno-octulosonate + diphosphate. Its pathway is nucleotide-sugar biosynthesis; CMP-3-deoxy-D-manno-octulosonate biosynthesis; CMP-3-deoxy-D-manno-octulosonate from 3-deoxy-D-manno-octulosonate and CTP: step 1/1. The protein operates within bacterial outer membrane biogenesis; lipopolysaccharide biosynthesis. Activates KDO (a required 8-carbon sugar) for incorporation into bacterial lipopolysaccharide in Gram-negative bacteria. This Bordetella parapertussis (strain 12822 / ATCC BAA-587 / NCTC 13253) protein is 3-deoxy-manno-octulosonate cytidylyltransferase.